Consider the following 373-residue polypeptide: mRNA export factor rae-1 (373 aa).

Met1 carries the N-acetylmethionine modification. 4 WD repeats span residues 40 to 82 (APED…TFEG), 87 to 126 (NIPAPILDIAWIEDSSKIFIACADKEARLWDLASNQVAVV), 128 to 169 (THDG…NQTQ), and 276 to 315 (QEIYAVNDICFHPQHGTLVTIGSDGRYSMWDKDARTKLKT).

It belongs to the WD repeat rae1 family. In terms of assembly, the nuclear pore complex (NPC) constitutes the exclusive means of nucleocytoplasmic transport. NPCs allow the passive diffusion of ions and small molecules and the active, nuclear transport receptor-mediated bidirectional transport of macromolecules such as proteins, RNAs, ribonucleoparticles (RNPs), and ribosomal subunits across the nuclear envelope. Interacts with rpm-1. In terms of tissue distribution, expressed along the ventral and dorsal nerve cords.

Its subcellular location is the nucleus. It is found in the nuclear pore complex. The protein resides in the cell projection. It localises to the axon. The protein localises to the synapse. In terms of biological role, functions as a component of the nuclear pore complex (NPC). NPC components, collectively referred to as nucleoporins (NUPs), can play the role of both NPC structural components and of docking or interaction partners for transiently associated nuclear transport factors. It is specifically important for nuclear mRNA export. Has a role in neuronal development, where it acts downstream of rpm-1 to control axon termination and synapse formation in anterior lateral microtubule (ALM) and posterior lateral microtubule (PLM) mechanosensory neurons. This chain is mRNA export factor rae-1, found in Caenorhabditis elegans.